The chain runs to 260 residues: Snake venom serine protease homolog 2A (260 aa).

Positions 1-18 (MVLIRVLANLLILQLSYA) are cleaved as a signal peptide. Positions 19 to 24 (QKSSEL) are excised as a propeptide. The 227-residue stretch at 25–251 (IIGGDECNIN…HLDWIKSIIA (227 aa)) folds into the Peptidase S1 domain. 6 cysteine pairs are disulfide-bonded: cysteine 31/cysteine 165, cysteine 52/cysteine 68, cysteine 100/cysteine 258, cysteine 144/cysteine 212, cysteine 176/cysteine 191, and cysteine 202/cysteine 227. Asparagine 83, asparagine 123, and asparagine 124 each carry an N-linked (GlcNAc...) asparagine glycan.

The protein belongs to the peptidase S1 family. Snake venom subfamily. In terms of tissue distribution, expressed by the venom gland.

It is found in the secreted. In terms of biological role, snake venom serine protease homolog that may act in the hemostasis system of the prey. The chain is Snake venom serine protease homolog 2A (TLG2A) from Craspedocephalus gramineus (Bamboo pit viper).